The chain runs to 135 residues: Large ribosomal subunit protein uL16c (135 aa).

The protein belongs to the universal ribosomal protein uL16 family. As to quaternary structure, part of the 50S ribosomal subunit.

Its subcellular location is the plastid. The protein resides in the chloroplast. The polypeptide is Large ribosomal subunit protein uL16c (Platanus occidentalis (Sycamore)).